A 325-amino-acid chain; its full sequence is Tartrate-resistant acid phosphatase type 5 (325 aa).

Residues 1-21 (MDMWTALLILQALLLPSLADG) form the signal peptide. Positions 33, 71, 74, and 110 each coordinate Fe cation. Residues Asn-116 and Asn-147 are each glycosylated (N-linked (GlcNAc...) asparagine). A disulfide bridge links Cys-161 with Cys-219. Fe cation contacts are provided by His-205, His-240, and His-242.

It belongs to the metallophosphoesterase superfamily. Purple acid phosphatase family. Exists either as monomer or, after proteolytic processing, as a dimer of two chains linked by disulfide bond(s). The cofactor is Fe cation.

The protein resides in the lysosome. The enzyme catalyses a phosphate monoester + H2O = an alcohol + phosphate. Involved in osteopontin/bone sialoprotein dephosphorylation. Its expression seems to increase in certain pathological states such as Gaucher and Hodgkin diseases, the hairy cell, the B-cell, and the T-cell leukemias. The protein is Tartrate-resistant acid phosphatase type 5 (ACP5) of Homo sapiens (Human).